A 213-amino-acid chain; its full sequence is Small ribosomal subunit protein eS1 (213 aa).

The disordered stretch occupies residues 189–213 (ARPEEVAAEEETAVDVDEEDVDVEA). Acidic residues predominate over residues 194 to 213 (VAAEEETAVDVDEEDVDVEA).

The protein belongs to the eukaryotic ribosomal protein eS1 family.

This Haloarcula marismortui (strain ATCC 43049 / DSM 3752 / JCM 8966 / VKM B-1809) (Halobacterium marismortui) protein is Small ribosomal subunit protein eS1.